The sequence spans 142 residues: Small heat shock protein IbpB (142 aa).

The 112-residue stretch at 26 to 137 (TAEHQAFPPY…APQRIAISDR (112 aa)) folds into the sHSP domain.

It belongs to the small heat shock protein (HSP20) family. As to quaternary structure, homodimer. Forms homomultimers of about 100-150 subunits at optimal growth temperatures. Conformation changes to oligomers at high temperatures or high ionic concentrations. The decrease in size of the multimers is accompanied by an increase in chaperone activity.

The protein resides in the cytoplasm. Associates with aggregated proteins, together with IbpA, to stabilize and protect them from irreversible denaturation and extensive proteolysis during heat shock and oxidative stress. Aggregated proteins bound to the IbpAB complex are more efficiently refolded and reactivated by the ATP-dependent chaperone systems ClpB and DnaK/DnaJ/GrpE. Its activity is ATP-independent. The protein is Small heat shock protein IbpB of Enterobacter sp. (strain 638).